The primary structure comprises 1393 residues: DNA-directed RNA polymerase subunit beta' (1393 aa).

Zn(2+) contacts are provided by Cys-72, Cys-74, Cys-87, and Cys-90. Mg(2+) contacts are provided by Asp-463, Asp-465, and Asp-467. Cys-812, Cys-887, Cys-894, and Cys-897 together coordinate Zn(2+).

This sequence belongs to the RNA polymerase beta' chain family. As to quaternary structure, the RNAP catalytic core consists of 2 alpha, 1 beta, 1 beta' and 1 omega subunit. When a sigma factor is associated with the core the holoenzyme is formed, which can initiate transcription. Mg(2+) is required as a cofactor. It depends on Zn(2+) as a cofactor.

It catalyses the reaction RNA(n) + a ribonucleoside 5'-triphosphate = RNA(n+1) + diphosphate. Functionally, DNA-dependent RNA polymerase catalyzes the transcription of DNA into RNA using the four ribonucleoside triphosphates as substrates. In Chlamydia pneumoniae (Chlamydophila pneumoniae), this protein is DNA-directed RNA polymerase subunit beta'.